The sequence spans 394 residues: Elongation factor Tu (394 aa).

Residues 10–204 form the tr-type G domain; sequence KPHVNVGTIG…HLDTYIPEPE (195 aa). The tract at residues 19–26 is G1; the sequence is GHVDHGKT. Residue 19–26 coordinates GTP; it reads GHVDHGKT. Thr26 is a binding site for Mg(2+). Residues 60 to 64 are G2; the sequence is GITIN. Residues 81-84 form a G3 region; that stretch reads DCPG. Residues 81–85 and 136–139 each bind GTP; these read DCPGH and NKCD. The segment at 136–139 is G4; the sequence is NKCD. Residues 174 to 176 are G5; the sequence is SAL.

It belongs to the TRAFAC class translation factor GTPase superfamily. Classic translation factor GTPase family. EF-Tu/EF-1A subfamily. As to quaternary structure, monomer.

Its subcellular location is the cytoplasm. It carries out the reaction GTP + H2O = GDP + phosphate + H(+). Its function is as follows. GTP hydrolase that promotes the GTP-dependent binding of aminoacyl-tRNA to the A-site of ribosomes during protein biosynthesis. The sequence is that of Elongation factor Tu from Klebsiella pneumoniae subsp. pneumoniae (strain ATCC 700721 / MGH 78578).